Reading from the N-terminus, the 180-residue chain is Thioredoxin 3 (180 aa).

Residues 1–3 (MAL) are Cytoplasmic-facing. A helical; Signal-anchor for type II membrane protein transmembrane segment spans residues 4-24 (ICIGSVCFSLFHIGVIILLII). The Lumenal portion of the chain corresponds to 25–180 (NYFSSHIKKI…FQKYCLEKAK (156 aa)). The Thioredoxin domain maps to 29–176 (SHIKKIFPSF…IEKAFQKYCL (148 aa)). Active-site nucleophile residues include Cys99 and Cys102. Cys99 and Cys102 are disulfide-bonded.

Belongs to the thioredoxin family. In terms of processing, the disulfide bond between Cys-99 and Cys-102 acts as a redox-active center and is reduced by thioredoxin reductase TRXR.

It is found in the endoplasmic reticulum membrane. Participates in various redox reactions through the reversible oxidation of its active center dithiol to a disulfide and catalyzes dithiol-disulfide exchange reactions. The polypeptide is Thioredoxin 3 (Plasmodium falciparum (isolate 3D7)).